The chain runs to 853 residues: MCSFVRVGSPKPLQTSASPLEMSSLRRTRAPEISELGLTPEQKDDIRDRVLRGSKSPTELGFDLRLEQDRKWRERMGSSEAKSPPCHALGVGLERHTISGTPTEMGNLGLHKGSAFQGSKPLGVLPGRVGPENKGLPPRLRYGGTLHPPFSTVHASPLAAESRRRPLAWGSAWTDAVVEKQPVVGLELRKEPEKEPTCVVMNPYPEMPPKEVDIGLPQTQESDEAKNTEPLIGLVREPSECPFAQQPEEKKEPGSTEPGVEPPGNIRPIYSGKFFDRVPCWPSAGKVKPVGYRVATCLTEKLPRLMTPPEAKKYFNFRYPPAGAERVFYGRANDPQIAPYLTHGLRSKISIPMGSLINPQPITTFQQKIKDKKESIYFSHQRAPLGKSHDQTPGLPKGMDVINTTLGTPTIRELSVRDTVNPSKSFEDVLKEGQEGHDLYTVSHNDYFAGEAKNRKYNPASFHRFNLYGIPTPHFNDGRTMAKALHWLHELQMERGAKIVSKRVDDFKEKFQHKLGKVLDPIAETMNVPPGHTFGSCLHPEEYGAGDLIHYRSPDEYLRGKDHQRAVVAAARHHLKKFNHQNFDTLQVAFRHYDKKGDGVIDRAELHEACVQANLHLDKMLLDHLFDYCDVDQDGLINYLEFANFLNWKDRIPLKEHEKRVVVKGKKPDCENVTDTSMGEAEPSLLINPEDIVPKEPGSSEETLRTIQRPGDKVSHQYKTTSSEINAVVGAVPSMCHPIFGVPTIRSDISAPRIRRVSDMNNYGDEGNAYSLLHPSIFSQKGVFERDFFKTRSKEEISDILTNIGVKLSKEEFENVWNLASKKHQRGEVCVETIRNVLDELLHADLVKCKTAM.

Disordered regions lie at residues 1–31 (MCSF…TRAP) and 244–266 (AQQP…PGNI). EF-hand domains are found at residues 581–616 (QNFD…ANLH) and 617–652 (LDKM…KDRI). Ca(2+) contacts are provided by Asp594, Asp598, Glu605, Asp630, Asp632, Asp634, and Glu641.

Microtubule inner protein component of sperm flagellar doublet microtubules. Interacts with STIM1 and ORAI1; the interactions take place upon Ca(2+)-store depletion and dissociate through a Ca(2+)-dependent mechanism. Interaction with STIM1 inhibits STIM1 interaction with SARAF.

It is found in the cytoplasm. Its subcellular location is the cytoskeleton. It localises to the cilium axoneme. The protein resides in the flagellum axoneme. In terms of biological role, microtubule inner protein (MIP) part of the dynein-decorated doublet microtubules (DMTs) in cilia axoneme, which is required for motile cilia beating. Cytosolic sensor for calcium, modulates the interaction of STIM1 and ORAI1 upon store depletion and the activation of store-operated Ca(2+) entry (SOCE) and NFAT translocation from cytosol to nucleus. This Mus musculus (Mouse) protein is EF-hand domain-containing family member B.